Reading from the N-terminus, the 319-residue chain is ATP-dependent 6-phosphofructokinase (319 aa).

ATP contacts are provided by residues G11, 72–73 (RS), and 102–105 (GDGS). D103 serves as a coordination point for Mg(2+). 126 to 128 (TID) contacts substrate. D128 (proton acceptor) is an active-site residue. ADP is bound at residue R155. Substrate contacts are provided by residues R163 and 170 to 172 (MGR). An ADP-binding site is contributed by 186–188 (GAE). Residues E223, R245, and 251–254 (HTQR) contribute to the substrate site.

It belongs to the phosphofructokinase type A (PFKA) family. ATP-dependent PFK group I subfamily. Prokaryotic clade 'B1' sub-subfamily. Homotetramer. Requires Mg(2+) as cofactor.

The protein resides in the cytoplasm. It carries out the reaction beta-D-fructose 6-phosphate + ATP = beta-D-fructose 1,6-bisphosphate + ADP + H(+). It participates in carbohydrate degradation; glycolysis; D-glyceraldehyde 3-phosphate and glycerone phosphate from D-glucose: step 3/4. Its activity is regulated as follows. Allosterically activated by ADP and other diphosphonucleosides, and allosterically inhibited by phosphoenolpyruvate. In terms of biological role, catalyzes the phosphorylation of D-fructose 6-phosphate to fructose 1,6-bisphosphate by ATP, the first committing step of glycolysis. This chain is ATP-dependent 6-phosphofructokinase, found in Sulfurimonas denitrificans (strain ATCC 33889 / DSM 1251) (Thiomicrospira denitrificans (strain ATCC 33889 / DSM 1251)).